The chain runs to 86 residues: Bacteriocin thailandicin (86 aa).

Residues 23-86 (LTANLGISSY…KYGAKYSAAW (64 aa)) constitute a cross-link (cyclopeptide (Leu-Trp)).

It localises to the secreted. Cyclopeptide antibiotic with bacteriolytic activity against the Gram-positive bacteria S.aureus and S.thermophilus, and lower activity against the Gram-negative bacteria E.coli and P.aeruginosa. The protein is Bacteriocin thailandicin of Enterococcus thailandicus.